We begin with the raw amino-acid sequence, 122 residues long: Large ribosomal subunit protein uL14 (122 aa).

It belongs to the universal ribosomal protein uL14 family. Part of the 50S ribosomal subunit. Forms a cluster with proteins L3 and L19. In the 70S ribosome, L14 and L19 interact and together make contacts with the 16S rRNA in bridges B5 and B8.

Its function is as follows. Binds to 23S rRNA. Forms part of two intersubunit bridges in the 70S ribosome. The sequence is that of Large ribosomal subunit protein uL14 from Syntrophotalea carbinolica (strain DSM 2380 / NBRC 103641 / GraBd1) (Pelobacter carbinolicus).